A 425-amino-acid chain; its full sequence is tRNA(Ile)-lysidine synthase (425 aa).

27–32 is a binding site for ATP; sequence SGGLDS.

This sequence belongs to the tRNA(Ile)-lysidine synthase family.

The protein localises to the cytoplasm. The enzyme catalyses cytidine(34) in tRNA(Ile2) + L-lysine + ATP = lysidine(34) in tRNA(Ile2) + AMP + diphosphate + H(+). Its function is as follows. Ligates lysine onto the cytidine present at position 34 of the AUA codon-specific tRNA(Ile) that contains the anticodon CAU, in an ATP-dependent manner. Cytidine is converted to lysidine, thus changing the amino acid specificity of the tRNA from methionine to isoleucine. The protein is tRNA(Ile)-lysidine synthase of Streptococcus pneumoniae serotype 2 (strain D39 / NCTC 7466).